A 374-amino-acid polypeptide reads, in one-letter code: MAKRDFYEILGLGKNASDEEIKKAYRKLAMKHHPDRNPDSKGAEDKFKEAKEAYEMLSDPQKRDAYDRYGHAGVDPNMGGGGGGGGFADAFGDIFGDIFGQAGGGRGGRGGPQVYRGADLRYNLEITLEQAAHGYDTTIRVPSWDSCETCDGSGAKPGTSPINCTTCGGHGQVRMQQGFFSVLQTCPKCHGSGKINPSPCTACSGAGKIKRNKTLEVKIPSGIDDGMRIRSSGNGEPGMNGGPPGDLYVEIRIKQHAMFQREGDDLHCEIPISFAKAALGGEIEVPTLNGKASFTIPEGTQSGKTFRLRSKGIKGVRSGYAGDLFCHVVVETPVTLTEKQKELLREFELLTIEGGSKHSPQTKSWKDKVKEFFE.

A J domain is found at 5–70 (DFYEILGLGK…QKRDAYDRYG (66 aa)). The disordered stretch occupies residues 28–47 (LAMKHHPDRNPDSKGAEDKF). Over residues 35-47 (DRNPDSKGAEDKF) the composition is skewed to basic and acidic residues. The CR-type zinc-finger motif lies at 134 to 212 (GYDTTIRVPS…CSGAGKIKRN (79 aa)). Zn(2+) contacts are provided by Cys-147, Cys-150, Cys-164, Cys-167, Cys-186, Cys-189, Cys-200, and Cys-203. 4 CXXCXGXG motif repeats span residues 147-154 (CETCDGSG), 164-171 (CTTCGGHG), 186-193 (CPKCHGSG), and 200-207 (CTACSGAG).

It belongs to the DnaJ family. Homodimer. The cofactor is Zn(2+).

It localises to the cytoplasm. Its function is as follows. Participates actively in the response to hyperosmotic and heat shock by preventing the aggregation of stress-denatured proteins and by disaggregating proteins, also in an autonomous, DnaK-independent fashion. Unfolded proteins bind initially to DnaJ; upon interaction with the DnaJ-bound protein, DnaK hydrolyzes its bound ATP, resulting in the formation of a stable complex. GrpE releases ADP from DnaK; ATP binding to DnaK triggers the release of the substrate protein, thus completing the reaction cycle. Several rounds of ATP-dependent interactions between DnaJ, DnaK and GrpE are required for fully efficient folding. Also involved, together with DnaK and GrpE, in the DNA replication of plasmids through activation of initiation proteins. This is Chaperone protein DnaJ from Herminiimonas arsenicoxydans.